The sequence spans 212 residues: HTH-type transcriptional regulator RutR (212 aa).

An HTH tetR-type domain is found at 17–77 (SAKKKAILSA…AVLRQILDIW (61 aa)). Residues 39–58 (TRLEQIAELAGVSKTNLLYY) constitute a DNA-binding region (H-T-H motif).

Homodimer.

Its function is as follows. Master transcription regulator which represses the degradation of pyrimidines (rutABCDEFG) and purines (gcl operon) for maintenance of metabolic balance between pyrimidines and purines. It also regulates the synthesis of pyrimidine nucleotides and arginine from glutamine (carAB) and the supply of glutamate (gadABWX). The chain is HTH-type transcriptional regulator RutR (rutR) from Escherichia coli O157:H7.